Here is an 873-residue protein sequence, read N- to C-terminus: Leucine--tRNA ligase (873 aa).

A 'HIGH' region motif is present at residues 42–52 (PYPSGKLHMGH). Residues 624-643 (PVEIGGTEKMSKSKNNGVDP) are disordered. A 'KMSKS' region motif is present at residues 632–636 (KMSKS). Lys635 provides a ligand contact to ATP.

It belongs to the class-I aminoacyl-tRNA synthetase family.

Its subcellular location is the cytoplasm. It carries out the reaction tRNA(Leu) + L-leucine + ATP = L-leucyl-tRNA(Leu) + AMP + diphosphate. The polypeptide is Leucine--tRNA ligase (Pseudomonas aeruginosa (strain ATCC 15692 / DSM 22644 / CIP 104116 / JCM 14847 / LMG 12228 / 1C / PRS 101 / PAO1)).